Reading from the N-terminus, the 219-residue chain is Chloramphenicol acetyltransferase (219 aa).

The active-site Proton acceptor is histidine 193.

It belongs to the chloramphenicol acetyltransferase family.

The enzyme catalyses chloramphenicol + acetyl-CoA = chloramphenicol 3-acetate + CoA. Its function is as follows. This enzyme is an effector of chloramphenicol resistance in bacteria. This Acinetobacter calcoaceticus subsp. anitratus protein is Chloramphenicol acetyltransferase (cat).